We begin with the raw amino-acid sequence, 239 residues long: Tumor protein p53-inducible nuclear protein 1 (239 aa).

The short motif at 25 to 37 (EKEDDEWILVDFI) is the LIR element.

In terms of assembly, interacts with p53/TP53 and HIPK2. Interacts with PRKCG, GABARAP, GABARAPL1, GABARAPL2, MAP1LC3A, MAP1LC3B and MAP1LC3C. Ubiquitously expressed with highest levels in the thymus.

The protein localises to the cytoplasm. Its subcellular location is the cytosol. The protein resides in the nucleus. It localises to the PML body. It is found in the cytoplasmic vesicle. The protein localises to the autophagosome. Its function is as follows. Antiproliferative and proapoptotic protein involved in cell stress response which acts as a dual regulator of transcription and autophagy. Acts as a positive regulator of autophagy. In response to cellular stress or activation of autophagy, relocates to autophagosomes where it interacts with autophagosome-associated proteins GABARAP, GABARAPL1/L2, MAP1LC3A/B/C and regulates autophagy. Acts as an antioxidant and plays a major role in p53/TP53-driven oxidative stress response. Possesses both a p53/TP53-independent intracellular reactive oxygen species (ROS) regulatory function and a p53/TP53-dependent transcription regulatory function. Positively regulates p53/TP53 and p73/TP73 and stimulates their capacity to induce apoptosis and regulate cell cycle. In response to double-strand DNA breaks, promotes p53/TP53 phosphorylation on 'Ser-46' and subsequent apoptosis. Acts as a tumor suppressor by inducing cell death by an autophagy and caspase-dependent mechanism. Can reduce cell migration by regulating the expression of SPARC. The sequence is that of Tumor protein p53-inducible nuclear protein 1 (Trp53inp1) from Mus musculus (Mouse).